Reading from the N-terminus, the 151-residue chain is 6,7-dimethyl-8-ribityllumazine synthase (151 aa).

5-amino-6-(D-ribitylamino)uracil contacts are provided by residues Phe18, 49-51 (ALE), and 74-76 (CVI). 79–80 (ET) serves as a coordination point for (2S)-2-hydroxy-3-oxobutyl phosphate. Residue His82 is the Proton donor of the active site. Asn107 is a 5-amino-6-(D-ribitylamino)uracil binding site. Arg121 contacts (2S)-2-hydroxy-3-oxobutyl phosphate.

Belongs to the DMRL synthase family.

The catalysed reaction is (2S)-2-hydroxy-3-oxobutyl phosphate + 5-amino-6-(D-ribitylamino)uracil = 6,7-dimethyl-8-(1-D-ribityl)lumazine + phosphate + 2 H2O + H(+). The protein operates within cofactor biosynthesis; riboflavin biosynthesis; riboflavin from 2-hydroxy-3-oxobutyl phosphate and 5-amino-6-(D-ribitylamino)uracil: step 1/2. Catalyzes the formation of 6,7-dimethyl-8-ribityllumazine by condensation of 5-amino-6-(D-ribitylamino)uracil with 3,4-dihydroxy-2-butanone 4-phosphate. This is the penultimate step in the biosynthesis of riboflavin. In Bartonella tribocorum (strain CIP 105476 / IBS 506), this protein is 6,7-dimethyl-8-ribityllumazine synthase.